Reading from the N-terminus, the 210-residue chain is Large ribosomal subunit protein uL4 (210 aa).

Positions 44-77 are disordered; the sequence is ARQGNASSKTRSEVRGGGRKPWRQKGTGRARAGS. The span at 60 to 71 shows a compositional bias: basic residues; sequence GGRKPWRQKGTG.

It belongs to the universal ribosomal protein uL4 family. In terms of assembly, part of the 50S ribosomal subunit.

Functionally, one of the primary rRNA binding proteins, this protein initially binds near the 5'-end of the 23S rRNA. It is important during the early stages of 50S assembly. It makes multiple contacts with different domains of the 23S rRNA in the assembled 50S subunit and ribosome. Forms part of the polypeptide exit tunnel. This Microcystis aeruginosa (strain NIES-843 / IAM M-2473) protein is Large ribosomal subunit protein uL4.